Consider the following 416-residue polypeptide: Coenzyme F420H(2) oxidase (416 aa).

Residues H87, E89, D91, H92, H155, D174, and H239 each contribute to the Fe cation site. The 142-residue stretch at 266–407 (AVIVYDTMHY…NCYNMGKELA (142 aa)) folds into the Flavodoxin-like domain. FMN is bound by residues 272–277 (TMHYST), 324–327 (TIYD), and 359–364 (SMGGEG).

It in the N-terminal section; belongs to the zinc metallo-hydrolase group 3 family. FMN is required as a cofactor. Fe cation serves as cofactor.

It catalyses the reaction 2 reduced coenzyme F420-(gamma-L-Glu)(n) + O2 = 2 oxidized coenzyme F420-(gamma-L-Glu)(n) + 2 H2O + 2 H(+). Its function is as follows. Catalyzes the oxidation of F420H(2) with O(2). May be involved in O(2) detoxification, reducing the intracellular O(2) concentration to a level allowing growth at the expense of methane formation. This Methanocaldococcus jannaschii (strain ATCC 43067 / DSM 2661 / JAL-1 / JCM 10045 / NBRC 100440) (Methanococcus jannaschii) protein is Coenzyme F420H(2) oxidase (fprA).